Here is a 389-residue protein sequence, read N- to C-terminus: GTPase Obg (389 aa).

The Obg domain maps to 1-159 (MKFVDEAVIR…RSLKLELMLL (159 aa)). Residues 122 to 144 (FHGLGNTRFKSSTNRAPRQKTLG) form a disordered region. The OBG-type G domain occupies 160 to 333 (ADVGLLGMPN…LSLKLIDFIE (174 aa)). Residues 166–173 (GMPNAGKS), 191–195 (FTTLV), 213–216 (DIPG), 283–286 (NKTD), and 314–316 (SAY) each bind GTP. Positions 173 and 193 each coordinate Mg(2+).

Belongs to the TRAFAC class OBG-HflX-like GTPase superfamily. OBG GTPase family. Monomer. Mg(2+) serves as cofactor.

It localises to the cytoplasm. Its function is as follows. An essential GTPase which binds GTP, GDP and possibly (p)ppGpp with moderate affinity, with high nucleotide exchange rates and a fairly low GTP hydrolysis rate. Plays a role in control of the cell cycle, stress response, ribosome biogenesis and in those bacteria that undergo differentiation, in morphogenesis control. The sequence is that of GTPase Obg from Shewanella woodyi (strain ATCC 51908 / MS32).